Consider the following 559-residue polypeptide: WD repeat-containing protein JIP5 (559 aa).

WD repeat units follow at residues 26–67, 77–116, 117–156, 162–201, 207–247, 265–306, 313–347, 354–394, and 428–470; these read QYSD…NYLQ, ADGK…WKTK, RHKG…VVKK, DNGG…ETNR, NGDD…ESDF, DQED…LEDQ, AKEE…DIKK, RNHS…SEEE, and DSDG…SDDE. Disordered regions lie at residues 386–500 and 515–559; these read SRNE…LIGL and EESE…FEGL. Acidic residues predominate over residues 391-417; it reads SEEEDDEESESFSDSDSDSDSDSDSDS. The span at 418–428 shows a compositional bias: basic and acidic residues; it reads DSDRDRDRDSD. A compositionally biased stretch (acidic residues) spans 482–494; it reads DMDDIDEGSDSSE. A compositionally biased stretch (basic and acidic residues) spans 520-534; sequence EGEKLQKKRKNEPSK. Basic residues predominate over residues 535–544; the sequence is KNTKNLKKVK.

This sequence belongs to the WD repeat WDR55 family.

It localises to the nucleus. It is found in the nucleolus. The polypeptide is WD repeat-containing protein JIP5 (JIP5) (Vanderwaltozyma polyspora (strain ATCC 22028 / DSM 70294 / BCRC 21397 / CBS 2163 / NBRC 10782 / NRRL Y-8283 / UCD 57-17) (Kluyveromyces polysporus)).